We begin with the raw amino-acid sequence, 329 residues long: Beta-ketoacyl-[acyl-carrier-protein] synthase III (329 aa).

Residues Cys-113 and His-255 contribute to the active site. The segment at 256–260 (QANQR) is ACP-binding. Residue Asn-285 is part of the active site.

This sequence belongs to the thiolase-like superfamily. FabH family. As to quaternary structure, homodimer.

The protein resides in the cytoplasm. The catalysed reaction is malonyl-[ACP] + acetyl-CoA + H(+) = 3-oxobutanoyl-[ACP] + CO2 + CoA. The protein operates within lipid metabolism; fatty acid biosynthesis. Functionally, catalyzes the condensation reaction of fatty acid synthesis by the addition to an acyl acceptor of two carbons from malonyl-ACP. Catalyzes the first condensation reaction which initiates fatty acid synthesis and may therefore play a role in governing the total rate of fatty acid production. Possesses both acetoacetyl-ACP synthase and acetyl transacylase activities. Its substrate specificity determines the biosynthesis of branched-chain and/or straight-chain of fatty acids. This chain is Beta-ketoacyl-[acyl-carrier-protein] synthase III, found in Chlorobium chlorochromatii (strain CaD3).